The following is a 287-amino-acid chain: MKRVLLFLATNMAILLVVSVVFNIVMAVTGIDAQGSVGLLVFCALFGFGGAFVSLWISRWMAIRSTGARVIEKPQNQSEEWLFRTVQQQAQKAGVPMPQVAVYQSPEPNAFATGRSKNASLVAVSTGLLQSMNADEVEAVLAHEMSHIANGDMVTLTLIQGVINTFVMFFARIIASAIMRGGDNQRGGGFAYYGVVMLLEIVFGVLASTIVMWFSRQREFRADAGSADLVGKQKMIAALRRLQQGKESELDGTMLAFGIKGKRSTMSKLFMSHPPLEERIHALEQRR.

Transmembrane regions (helical) follow at residues 4-24 (VLLFLATNMAILLVVSVVFNI) and 37-57 (VGLLVFCALFGFGGAFVSLWI). Residue His143 coordinates Zn(2+). Glu144 is an active-site residue. His147 contributes to the Zn(2+) binding site. The next 2 helical transmembrane spans lie at 158–178 (LIQGVINTFVMFFARIIASAI) and 194–214 (GVVMLLEIVFGVLASTIVMWF). A Zn(2+)-binding site is contributed by Glu219.

The protein belongs to the peptidase M48B family. The cofactor is Zn(2+).

It is found in the cell inner membrane. This is Protease HtpX from Idiomarina loihiensis (strain ATCC BAA-735 / DSM 15497 / L2-TR).